The chain runs to 358 residues: Feruloyl CoA ortho-hydroxylase F6H1-1 (358 aa).

Positions 200–308 (TKESLLMGSK…RISVPIFVNP (109 aa)) constitute a Fe2OG dioxygenase domain. Tyr-216 lines the 2-oxoglutarate pocket. Fe cation-binding residues include His-231, Asp-233, and His-289. 2-oxoglutarate is bound by residues Arg-299 and Ser-301.

It belongs to the iron/ascorbate-dependent oxidoreductase family. L-ascorbate serves as cofactor. The cofactor is Fe(2+).

The catalysed reaction is (E)-feruloyl-CoA + 2-oxoglutarate + O2 = (E)-6-hydroxyferuloyl-CoA + succinate + CO2. The protein operates within phenylpropanoid metabolism. Its function is as follows. 2-oxoglutarate (OG)- and Fe(II)-dependent dioxygenase (2OGD) involved in scopoletin biosynthesis. Converts feruloyl CoA into 6'-hydroxyferuloyl CoA. This Ipomoea batatas (Sweet potato) protein is Feruloyl CoA ortho-hydroxylase F6H1-1.